Here is a 213-residue protein sequence, read N- to C-terminus: General transcription factor 3C polypeptide 6 (213 aa).

Residues 1-11 (MAAAADERSPE) are compositionally biased toward basic and acidic residues. Disordered stretches follow at residues 1–20 (MAAA…EEEE) and 191–213 (SGPL…QMLP). At alanine 2 the chain carries N-acetylalanine. Position 9 is a phosphoserine (serine 9).

The protein belongs to the TFIIIC subunit 6 family. In terms of assembly, part of the TFIIIC subcomplex TFIIIC2, consisting of six subunits, GTF3C1, GTF3C2, GTF3C3, GTF3C4, GTF3C5 and GTF3C6. Interacts with GTF3C4 and GTF3C5.

The protein localises to the nucleus. Involved in RNA polymerase III-mediated transcription. Integral, tightly associated component of the DNA-binding TFIIIC2 subcomplex that directly binds tRNA and virus-associated RNA promoters. This is General transcription factor 3C polypeptide 6 (GTF3C6) from Homo sapiens (Human).